The primary structure comprises 406 residues: Leu/Ile/Val-binding protein homolog 5 (406 aa).

The signal sequence occupies residues 1–29; sequence MIGTRLPAWTRVLACGVAGLSLMTISAKA.

It belongs to the leucine-binding protein family.

Functionally, component of an amino-acid transport system. The protein is Leu/Ile/Val-binding protein homolog 5 of Brucella suis biovar 1 (strain 1330).